Consider the following 505-residue polypeptide: Bifunctional pantoate ligase/cytidylate kinase (505 aa).

A pantoate--beta-alanine ligase region spans residues 1 to 268 (MHQWRKHQQS…CGETRLIDHT (268 aa)). 18–25 (MGALHRGH) serves as a coordination point for ATP. Histidine 25 (proton donor) is an active-site residue. Glutamine 53 contacts (R)-pantoate. Glutamine 53 serves as a coordination point for beta-alanine. 142 to 145 (GEKD) lines the ATP pocket. Glutamine 148 serves as a coordination point for (R)-pantoate. ATP contacts are provided by residues valine 171 and 179–182 (CSSR). The cytidylate kinase stretch occupies residues 269 to 505 (FLMSRQPIVA…PEEVWPTAGR (237 aa)).

In the N-terminal section; belongs to the pantothenate synthetase family. This sequence in the C-terminal section; belongs to the cytidylate kinase family. Type 1 subfamily.

Its subcellular location is the cytoplasm. It carries out the reaction (R)-pantoate + beta-alanine + ATP = (R)-pantothenate + AMP + diphosphate + H(+). The catalysed reaction is CMP + ATP = CDP + ADP. It catalyses the reaction dCMP + ATP = dCDP + ADP. Its pathway is cofactor biosynthesis; (R)-pantothenate biosynthesis; (R)-pantothenate from (R)-pantoate and beta-alanine: step 1/1. In terms of biological role, catalyzes the condensation of pantoate with beta-alanine in an ATP-dependent reaction via a pantoyl-adenylate intermediate. Catalyzes the transfer of a phosphate group from ATP to either CMP or dCMP to form CDP or dCDP and ADP, respectively. The sequence is that of Bifunctional pantoate ligase/cytidylate kinase from Prochlorococcus marinus (strain MIT 9313).